The primary structure comprises 675 residues: Pesticidal crystal protein Cry10Aa (675 aa).

It belongs to the delta endotoxin family.

Functionally, promotes colloidosmotic lysis by binding to the midgut epithelial cells of mosquitos. Active on Aedes aegypti. This is Pesticidal crystal protein Cry10Aa (cry10Aa) from Bacillus thuringiensis subsp. israelensis.